We begin with the raw amino-acid sequence, 395 residues long: ATP-dependent RNA helicase eIF4A (395 aa).

Residues 22–50 (TSFDDLGLKDELLRGIYGYGFENPSSIQQ) carry the Q motif motif. Residues 53 to 223 (ILPVIKGNDV…GKFMRDPVRI (171 aa)) enclose the Helicase ATP-binding domain. 66 to 73 (AQSGTGKT) is a binding site for ATP. The DEAD box signature appears at 171 to 174 (DEAD). Residues 234-395 (GIKQFYIDVE…EMPTNIADLI (162 aa)) form the Helicase C-terminal domain.

Belongs to the DEAD box helicase family. eIF4A subfamily. Component of the eIF4F complex, which composition varies with external and internal environmental conditions. It is composed of at least eIF4A, eIF4E and eIF4G.

It is found in the cytoplasm. The enzyme catalyses ATP + H2O = ADP + phosphate + H(+). Functionally, ATP-dependent RNA helicase which is a subunit of the eIF4F complex involved in cap recognition and is required for mRNA binding to ribosome. In the current model of translation initiation, eIF4A unwinds RNA secondary structures in the 5'-UTR of mRNAs which is necessary to allow efficient binding of the small ribosomal subunit, and subsequent scanning for the initiator codon. This is ATP-dependent RNA helicase eIF4A (TIF1) from Yarrowia lipolytica (strain CLIB 122 / E 150) (Yeast).